Reading from the N-terminus, the 365-residue chain is Chorismate synthase (365 aa).

Arg-47 contributes to the NADP(+) binding site. Residues 124–126 (RAS), Gly-287, 302–306 (KPTAT), and Arg-328 each bind FMN. The segment at 266 to 290 (FIKSDDSSKLRTTSNNSGGIQGGIS) is disordered.

It belongs to the chorismate synthase family. Homotetramer. Requires FMNH2 as cofactor.

The enzyme catalyses 5-O-(1-carboxyvinyl)-3-phosphoshikimate = chorismate + phosphate. It functions in the pathway metabolic intermediate biosynthesis; chorismate biosynthesis; chorismate from D-erythrose 4-phosphate and phosphoenolpyruvate: step 7/7. Catalyzes the anti-1,4-elimination of the C-3 phosphate and the C-6 proR hydrogen from 5-enolpyruvylshikimate-3-phosphate (EPSP) to yield chorismate, which is the branch point compound that serves as the starting substrate for the three terminal pathways of aromatic amino acid biosynthesis. This reaction introduces a second double bond into the aromatic ring system. This is Chorismate synthase from Prochlorococcus marinus (strain MIT 9301).